We begin with the raw amino-acid sequence, 347 residues long: Ubiquinone biosynthesis protein coq-4, mitochondrial (347 aa).

The N-terminal 49 residues, 1–49, are a transit peptide targeting the mitochondrion; the sequence is MEVTALRRSAALVARASSQNAIRPAVCAAISSTSPTPPTQIQTQQTRQF. Positions 185, 186, 189, and 201 each coordinate Zn(2+). The tract at residues 284 to 310 is disordered; sequence IRKREREEKRRRKEMERMLSGRGTEDV.

It belongs to the COQ4 family. Component of a multi-subunit COQ enzyme complex, composed of at least coq-3, coq-4, coq-5, coq-6, coq-7 and coq-9. Requires Zn(2+) as cofactor.

It localises to the mitochondrion inner membrane. The catalysed reaction is a 4-hydroxy-3-methoxy-5-(all-trans-polyprenyl)benzoate + H(+) = a 2-methoxy-6-(all-trans-polyprenyl)phenol + CO2. It participates in cofactor biosynthesis; ubiquinone biosynthesis. In terms of biological role, lyase that catalyzes the C1-decarboxylation of 4-hydroxy-3-methoxy-5-(all-trans-polyprenyl)benzoic acid into 2-methoxy-6-(all-trans-polyprenyl)phenol during ubiquinone biosynthesis. The polypeptide is Ubiquinone biosynthesis protein coq-4, mitochondrial (Neurospora crassa (strain ATCC 24698 / 74-OR23-1A / CBS 708.71 / DSM 1257 / FGSC 987)).